A 616-amino-acid chain; its full sequence is Dihydroxy-acid dehydratase (616 aa).

Residue Asp-81 participates in Mg(2+) binding. Cys-122 lines the [2Fe-2S] cluster pocket. Mg(2+)-binding residues include Asp-123 and Lys-124. Lys-124 carries the post-translational modification N6-carboxylysine. Cys-195 serves as a coordination point for [2Fe-2S] cluster. Residue Glu-491 participates in Mg(2+) binding. Ser-517 serves as the catalytic Proton acceptor.

This sequence belongs to the IlvD/Edd family. Homodimer. The cofactor is [2Fe-2S] cluster. It depends on Mg(2+) as a cofactor.

The catalysed reaction is (2R)-2,3-dihydroxy-3-methylbutanoate = 3-methyl-2-oxobutanoate + H2O. The enzyme catalyses (2R,3R)-2,3-dihydroxy-3-methylpentanoate = (S)-3-methyl-2-oxopentanoate + H2O. It functions in the pathway amino-acid biosynthesis; L-isoleucine biosynthesis; L-isoleucine from 2-oxobutanoate: step 3/4. Its pathway is amino-acid biosynthesis; L-valine biosynthesis; L-valine from pyruvate: step 3/4. In terms of biological role, functions in the biosynthesis of branched-chain amino acids. Catalyzes the dehydration of (2R,3R)-2,3-dihydroxy-3-methylpentanoate (2,3-dihydroxy-3-methylvalerate) into 2-oxo-3-methylpentanoate (2-oxo-3-methylvalerate) and of (2R)-2,3-dihydroxy-3-methylbutanoate (2,3-dihydroxyisovalerate) into 2-oxo-3-methylbutanoate (2-oxoisovalerate), the penultimate precursor to L-isoleucine and L-valine, respectively. The chain is Dihydroxy-acid dehydratase from Blochmanniella pennsylvanica (strain BPEN).